The following is a 370-amino-acid chain: 3-dehydroquinate synthase (370 aa).

NAD(+) is bound by residues 112 to 116 (GVVGD), 136 to 137 (TS), Lys149, Lys158, and 176 to 179 (TLRT). Zn(2+) contacts are provided by Glu191, His254, and His276.

It belongs to the sugar phosphate cyclases superfamily. Dehydroquinate synthase family. Requires Co(2+) as cofactor. The cofactor is Zn(2+). NAD(+) serves as cofactor.

Its subcellular location is the cytoplasm. It carries out the reaction 7-phospho-2-dehydro-3-deoxy-D-arabino-heptonate = 3-dehydroquinate + phosphate. The protein operates within metabolic intermediate biosynthesis; chorismate biosynthesis; chorismate from D-erythrose 4-phosphate and phosphoenolpyruvate: step 2/7. In terms of biological role, catalyzes the conversion of 3-deoxy-D-arabino-heptulosonate 7-phosphate (DAHP) to dehydroquinate (DHQ). The sequence is that of 3-dehydroquinate synthase from Xanthomonas oryzae pv. oryzae (strain MAFF 311018).